We begin with the raw amino-acid sequence, 44 residues long: Mu-conotoxin-like Cal 12.1.2h (44 aa).

Cystine bridges form between cysteine 3–cysteine 16, cysteine 11–cysteine 28, cysteine 18–cysteine 33, and cysteine 27–cysteine 38. Tryptophan 17 carries the 6'-bromotryptophan modification. Residue proline 23 is modified to 4-hydroxyproline. Residues tryptophan 36 and tryptophan 37 each carry the 6'-bromotryptophan modification. Proline 39 is modified (4-hydroxyproline). Tryptophan 43 carries the 6'-bromotryptophan modification.

In terms of tissue distribution, expressed by the venom duct.

The protein localises to the secreted. Mu-conotoxins block voltage-gated sodium channels. This toxin reversibly blocks voltage-gated sodium channel in cephalopods, with no alteration in the voltage dependence of sodium conductance or on the kinetics of inactivation. The polypeptide is Mu-conotoxin-like Cal 12.1.2h (Californiconus californicus (California cone)).